A 267-amino-acid polypeptide reads, in one-letter code: Dihydropteroate synthase (267 aa).

Positions 1–251 (MTKTKIMGIL…NVELNAKLAK (251 aa)) constitute a Pterin-binding domain. Position 11 (asparagine 11) interacts with Mg(2+). (7,8-dihydropterin-6-yl)methyl diphosphate contacts are provided by residues threonine 51, aspartate 84, asparagine 103, aspartate 167, lysine 203, and 239–241 (RVH).

Belongs to the DHPS family. As to quaternary structure, homodimer. Requires Mg(2+) as cofactor.

The enzyme catalyses (7,8-dihydropterin-6-yl)methyl diphosphate + 4-aminobenzoate = 7,8-dihydropteroate + diphosphate. It participates in cofactor biosynthesis; tetrahydrofolate biosynthesis; 7,8-dihydrofolate from 2-amino-4-hydroxy-6-hydroxymethyl-7,8-dihydropteridine diphosphate and 4-aminobenzoate: step 1/2. Functionally, catalyzes the condensation of para-aminobenzoate (pABA) with 6-hydroxymethyl-7,8-dihydropterin diphosphate (DHPt-PP) to form 7,8-dihydropteroate (H2Pte), the immediate precursor of folate derivatives. This is Dihydropteroate synthase (folP) from Staphylococcus aureus (strain Mu50 / ATCC 700699).